Consider the following 334-residue polypeptide: Heat-inducible transcription repressor HrcA (334 aa).

This sequence belongs to the HrcA family.

Functionally, negative regulator of class I heat shock genes (grpE-dnaK-dnaJ and groELS operons). Prevents heat-shock induction of these operons. The polypeptide is Heat-inducible transcription repressor HrcA (Acidovorax sp. (strain JS42)).